Reading from the N-terminus, the 335-residue chain is Probable cytosolic iron-sulfur protein assembly protein Ciao1 (335 aa).

7 WD repeats span residues 12-51 (GHKGRIWGVAWHPKGNTFASCGEDKAIRIWSLSGNSWSTK), 57-96 (GHKRTIREIRWSPCGQYLASASFDATTAIWSKSSGEFECN), 101-140 (GHENEVKSVSWSKSGGLLATCSRDKSVWIWEVAGDDEFEC), 146-185 (PHTQDVKRVVWHPTKEILASASYDNTIKMFAESALDSDWD), 192-231 (SHTSTVWSIDFDADGERLVSCSDDTTLKIWRAYHPGNDAG), 250-289 (QHSRAIYDVSWCKLTGLIATACGDDGIRIFKESSDSKRDE), and 301-335 (AHEQDVNSVEWNPVMAGQLISCSDDGTIKIWKMLD).

Belongs to the WD repeat CIA1 family.

In terms of biological role, essential component of the cytosolic iron-sulfur (Fe/S) protein assembly machinery. Required for the maturation of extramitochondrial Fe/S proteins. In Drosophila willistoni (Fruit fly), this protein is Probable cytosolic iron-sulfur protein assembly protein Ciao1.